The primary structure comprises 224 residues: Ribose-5-phosphate isomerase A (224 aa).

Residues 34–37 (TGST), 87–90 (DGAD), and 100–103 (KGGG) each bind substrate. Glutamate 109 functions as the Proton acceptor in the catalytic mechanism. Lysine 127 serves as a coordination point for substrate.

Belongs to the ribose 5-phosphate isomerase family. In terms of assembly, homodimer.

The catalysed reaction is aldehydo-D-ribose 5-phosphate = D-ribulose 5-phosphate. It functions in the pathway carbohydrate degradation; pentose phosphate pathway; D-ribose 5-phosphate from D-ribulose 5-phosphate (non-oxidative stage): step 1/1. Catalyzes the reversible conversion of ribose-5-phosphate to ribulose 5-phosphate. The chain is Ribose-5-phosphate isomerase A from Francisella tularensis subsp. novicida (strain U112).